Consider the following 566-residue polypeptide: Glutamate--tRNA ligase (566 aa).

Residues 105–115 (PNPDGPIHLGN) carry the 'HIGH' region motif.

Belongs to the class-I aminoacyl-tRNA synthetase family. Glutamate--tRNA ligase type 2 subfamily.

Its subcellular location is the cytoplasm. The enzyme catalyses tRNA(Glu) + L-glutamate + ATP = L-glutamyl-tRNA(Glu) + AMP + diphosphate. Its function is as follows. Catalyzes the attachment of glutamate to tRNA(Glu) in a two-step reaction: glutamate is first activated by ATP to form Glu-AMP and then transferred to the acceptor end of tRNA(Glu). The chain is Glutamate--tRNA ligase from Sulfurisphaera tokodaii (strain DSM 16993 / JCM 10545 / NBRC 100140 / 7) (Sulfolobus tokodaii).